The chain runs to 81 residues: Sulfur carrier protein TusA (81 aa).

Cysteine 19 acts as the Cysteine persulfide intermediate in catalysis.

The protein belongs to the sulfur carrier protein TusA family. As to quaternary structure, interacts with IscS.

Its subcellular location is the cytoplasm. Its pathway is tRNA modification. Its function is as follows. Sulfur carrier protein involved in sulfur trafficking in the cell. Part of a sulfur-relay system required for 2-thiolation during synthesis of 2-thiouridine of the modified wobble base 5-methylaminomethyl-2-thiouridine (mnm(5)s(2)U) in tRNA. Interacts with IscS and stimulates its cysteine desulfurase activity. Accepts an activated sulfur from IscS, which is then transferred to TusD, and thus determines the direction of sulfur flow from IscS to 2-thiouridine formation. Also appears to be involved in sulfur transfer for the biosynthesis of molybdopterin. This chain is Sulfur carrier protein TusA, found in Shigella boydii serotype 18 (strain CDC 3083-94 / BS512).